We begin with the raw amino-acid sequence, 204 residues long: Proteasome subunit beta 2 (204 aa).

Residues 1 to 6 (MEVLPG) constitute a propeptide, removed in mature form; by autocatalysis. Thr-7 serves as the catalytic Nucleophile.

This sequence belongs to the peptidase T1B family. As to quaternary structure, the 20S proteasome core is composed of 14 alpha and 14 beta subunits that assemble into four stacked heptameric rings, resulting in a barrel-shaped structure. The two inner rings, each composed of seven catalytic beta subunits, are sandwiched by two outer rings, each composed of seven alpha subunits. The catalytic chamber with the active sites is on the inside of the barrel. Has a gated structure, the ends of the cylinder being occluded by the N-termini of the alpha-subunits. Is capped at one or both ends by the proteasome regulatory ATPase, PAN.

The protein resides in the cytoplasm. It carries out the reaction Cleavage of peptide bonds with very broad specificity.. Its activity is regulated as follows. The formation of the proteasomal ATPase PAN-20S proteasome complex, via the docking of the C-termini of PAN into the intersubunit pockets in the alpha-rings, triggers opening of the gate for substrate entry. Interconversion between the open-gate and close-gate conformations leads to a dynamic regulation of the 20S proteasome proteolysis activity. In terms of biological role, component of the proteasome core, a large protease complex with broad specificity involved in protein degradation. This chain is Proteasome subunit beta 2, found in Thermofilum pendens (strain DSM 2475 / Hrk 5).